Here is a 345-residue protein sequence, read N- to C-terminus: Biotin synthase (345 aa).

The 226-residue stretch at 66–291 (PEVEVEGIIS…RTMLRFAGGR (226 aa)) folds into the Radical SAM core domain. 3 residues coordinate [4Fe-4S] cluster: C81, C85, and C88. 4 residues coordinate [2Fe-2S] cluster: C124, C157, C216, and R286.

It belongs to the radical SAM superfamily. Biotin synthase family. Homodimer. The cofactor is [4Fe-4S] cluster. It depends on [2Fe-2S] cluster as a cofactor.

It catalyses the reaction (4R,5S)-dethiobiotin + (sulfur carrier)-SH + 2 reduced [2Fe-2S]-[ferredoxin] + 2 S-adenosyl-L-methionine = (sulfur carrier)-H + biotin + 2 5'-deoxyadenosine + 2 L-methionine + 2 oxidized [2Fe-2S]-[ferredoxin]. It participates in cofactor biosynthesis; biotin biosynthesis; biotin from 7,8-diaminononanoate: step 2/2. Catalyzes the conversion of dethiobiotin (DTB) to biotin by the insertion of a sulfur atom into dethiobiotin via a radical-based mechanism. The chain is Biotin synthase from Mycobacterium avium (strain 104).